The primary structure comprises 85 residues: Conotoxin Lv15a (85 aa).

The signal sequence occupies residues 1–23 (MEKLTVLILVATVLLMIQVLAQS). A propeptide spanning residues 24–49 (GGDKHLKRRPKQYATKRLSALMRGHR) is cleaved from the precursor. Pyrrolidone carboxylic acid is present on Gln50.

Belongs to the conotoxin O2 superfamily. Contains 4 disulfide bonds. As to expression, expressed by the venom duct.

The protein localises to the secreted. The chain is Conotoxin Lv15a from Conus lividus (Livid cone).